Consider the following 675-residue polypeptide: Acetyl-coenzyme A synthetase 1 (675 aa).

The segment covering 1 to 10 (MPESTQQSHL) has biased composition (polar residues). A disordered region spans residues 1 to 32 (MPESTQQSHLSLDHEKMQQPPKGFTERSKTKP). CoA is bound by residues 212–215 (RGGK) and Thr331. Residues 407–409 (GEP), 431–436 (DTYWQT), Asp522, and Arg537 contribute to the ATP site. Ser545 contacts CoA. Arg548 serves as a coordination point for ATP. Arg609 serves as a coordination point for CoA.

Belongs to the ATP-dependent AMP-binding enzyme family.

It catalyses the reaction acetate + ATP + CoA = acetyl-CoA + AMP + diphosphate. This is Acetyl-coenzyme A synthetase 1 (ACS1) from Candida albicans (Yeast).